A 302-amino-acid polypeptide reads, in one-letter code: Sulfate adenylyltransferase subunit 2 (302 aa).

Residues 280-302 (RQGRAIDHDQSGSMELKKRQGYF) form a disordered region.

Belongs to the PAPS reductase family. CysD subfamily. In terms of assembly, heterodimer composed of CysD, the smaller subunit, and CysN.

It carries out the reaction sulfate + ATP + H(+) = adenosine 5'-phosphosulfate + diphosphate. It functions in the pathway sulfur metabolism; hydrogen sulfide biosynthesis; sulfite from sulfate: step 1/3. Its function is as follows. With CysN forms the ATP sulfurylase (ATPS) that catalyzes the adenylation of sulfate producing adenosine 5'-phosphosulfate (APS) and diphosphate, the first enzymatic step in sulfur assimilation pathway. APS synthesis involves the formation of a high-energy phosphoric-sulfuric acid anhydride bond driven by GTP hydrolysis by CysN coupled to ATP hydrolysis by CysD. The protein is Sulfate adenylyltransferase subunit 2 of Vibrio atlanticus (strain LGP32) (Vibrio splendidus (strain Mel32)).